Consider the following 321-residue polypeptide: Tetraacyldisaccharide 4'-kinase (321 aa).

54-61 (SVGGTGKT) provides a ligand contact to ATP.

It belongs to the LpxK family.

It carries out the reaction a lipid A disaccharide + ATP = a lipid IVA + ADP + H(+). Its pathway is glycolipid biosynthesis; lipid IV(A) biosynthesis; lipid IV(A) from (3R)-3-hydroxytetradecanoyl-[acyl-carrier-protein] and UDP-N-acetyl-alpha-D-glucosamine: step 6/6. Its function is as follows. Transfers the gamma-phosphate of ATP to the 4'-position of a tetraacyldisaccharide 1-phosphate intermediate (termed DS-1-P) to form tetraacyldisaccharide 1,4'-bis-phosphate (lipid IVA). The chain is Tetraacyldisaccharide 4'-kinase from Rickettsia conorii (strain ATCC VR-613 / Malish 7).